We begin with the raw amino-acid sequence, 2178 residues long: MQTTQNRLKTKRYASFFLNPKLNRPIQKKGWIKKADFNQLTDSLCKQSLKAYNEKLYSPLSQFKIPDFLNIQRSSFRQFLKSGLITEFKNCKSITNSNQTFEVFFYAEHYKLNRPKWTPKQAILKKKSYSSQLYLPIQLSNYQTEEVHLQWVLLANLPLMTKNGHFILNGCPRVLMNQIVRSPGVYFRKVVKNQKTVYSADFIAQRGSWLRLEVDTKKGDIWAKLKKTPKIPIFTFLRALGLTLPILNNSIDFAKLRYLLQFKEESKRSKKIKDFLGPGINNSLDIVEFRSLLKSLKKYMKPKPAKKSSKKQKTKKIKKWLTPFVCTTYFQSLLELCQKLYPQKKFLELDPKLAQKFLFRKFQNPRTYDLSILGREKINKKLGISIPLEKTILTSQDVLFACLFLMDLLQGLVISDDIDDLKNRKIKPSGELIQTQLSTGLIRLEKIIREKLKQPKQDSDSFSNLFSVKPLNQAFRDFFGTNPLSQLMDQTNALSEITHKRRLSSLGPGGINRETAGMAIRGIHPTHYGRICPIETPEGQNAGLVNSFTIFSHLNTKSFIETPFYKMYKGFILKNKNPFLFSSDQERNLVLAPGDIQTSLFHFLPPGVPIPSRQFKEFKRVSRNEINFIAVSPIQMISIATSLIPFLEHNDGNRALMGSNMQRQAVPTVRPSKPIVGTGLESRVISDVGHGLQVQKSGFVSYVDGNKIIIYSKKRIDQPFFFDTKKLHFPKKKVPFLNLDLQQQNTCRSSFKKKLVKSANIFTFKEKQLYQLSKIKNKKQRVCFEKSLKSQDFSSLLNFLTLFNIKTKVQAEKKASVQDASFILVPKKNLDLEVNKRIFLPVFLKKRNEYNFLNYYKLTERTLYSGFSILPFKLTNKGNYFNNKQISCLSNSLFLNDFLGQFHLLKFFSTKIFYSKLSRNFKPFISKRSLVLINKFSHQKLLFSYCKIILIHFYTKFNKKTPKNFLLNTKLSSKLMKRKDFSHFFRKDEKTMPIQNLTNFKSAHLHSQTAVKGVCQQIRSARKTQIANPFWYNSFPLFLIKSSPLTPLLFRRSFVPKVFNPLGLHFAYQQSKGPKHVSRTFKTLDRNEQKFSYNQKFQKLNFIFVKPYKFKRKNSPFAPFARSSKARGSAKAIFSQAQRLWGEKVFLVQNKENLPQTLGSCKIMTNQFYLKFSLLLKQQKKNFSNKKTGMENQNCQNSLTSQKNGFQCLKKMEPLHFPTKKSSISTLSFVKKILPYFQHPLLNLTTQNKIKNKLMIFKKPFLFWSACFADKQSLRSILFSLKKSQKVTTLKKTKVKKKFEIVYNENKKKYFQKINKNFFLPLLCRTRNLNFASNSLLFQISYPVAVNQSNLIQRNLISQELKHNSKRFIKTLLKIKPFVGKFVFPFCPICLKRKASIETQSFVKKSDKNFQFCFCFSRKKQKTLKPLLRIKSSDKMNTLKPLQKFSLLENFKVPPQSSLTARDKILRSTIGTKGLNDSLSMKSTDGEYAINDKKRRVEIINSSSLFYNNLIPQNYILNNYHRSNQDTYMIHRPLVQEGQWVEKGDILADSSVSVQGELSIGQNILVGYIPWEGYNFEDAVLISERLIFDDLYTSLHIERYEVEIRDTQFGLEQITNQIPNEKGEYDYIDSNGIAKIGTWVKEGDILVGKIAPIGQKKLTAYENLLYDILNKEIPKTRDTSLRVPRGVTGRVIHVEIVETTKKKGNDSSIFAKSLKFPKKQKLKRVTSPEYWYPVNTKKDQKVQSFSFKNKSEKLFLTPVQSYFNKEAKTKNPKLNSPFFYLNKRNPDFNLKRNKRIAKEMYFFNKNEKIKLSTLQIKIKGLEKKEFSFPKILKARFSLLQKAQTANLKIEKFLDDKFWNNVNYSNKNFSRNGSQKENSNADGLQFYNPLKKTKTKVLQPMEKTSFSGPQKVHIYLAEKRKLQIGDKIAGRHGNKGIISNILPRQDMPYLSDGTPLDIVLNPLGVPSRMNVGQILECLLGMAGYYLKQNFKIQPFDEIYGCEASRSLVYSKLYEARIKTGQDWLFNANHPGKTRLFDGRTGDCFKQPVTVGVAYILKLIHLVDDKIHARSTGPYSLVTQQPLRGRSKQGGQRVGEMEVWALEGFGAAYILQEILTIKSDDLKGRNQVMNSILNNKPVNFGLPESFKVLVRELQSLCLDIAIYRYRENGTPTKININNFW.

Insert stretches follow at residues serine 269–valine 325, lysine 714–asparagine 1508, and lysine 1703–methionine 1900.

Belongs to the RNA polymerase beta chain family. In plastids the minimal PEP RNA polymerase catalytic core is composed of four subunits: alpha, beta, beta', and beta''. When a (nuclear-encoded) sigma factor is associated with the core the holoenzyme is formed, which can initiate transcription.

Its subcellular location is the plastid. The protein resides in the chloroplast. It catalyses the reaction RNA(n) + a ribonucleoside 5'-triphosphate = RNA(n+1) + diphosphate. Its function is as follows. DNA-dependent RNA polymerase catalyzes the transcription of DNA into RNA using the four ribonucleoside triphosphates as substrates. The polypeptide is DNA-directed RNA polymerase subunit beta (Tupiella akineta (Green alga)).